The primary structure comprises 256 residues: Imidazole glycerol phosphate synthase subunit HisF (256 aa).

Catalysis depends on residues aspartate 11 and aspartate 130.

Belongs to the HisA/HisF family. In terms of assembly, heterodimer of HisH and HisF.

It localises to the cytoplasm. The catalysed reaction is 5-[(5-phospho-1-deoxy-D-ribulos-1-ylimino)methylamino]-1-(5-phospho-beta-D-ribosyl)imidazole-4-carboxamide + L-glutamine = D-erythro-1-(imidazol-4-yl)glycerol 3-phosphate + 5-amino-1-(5-phospho-beta-D-ribosyl)imidazole-4-carboxamide + L-glutamate + H(+). It participates in amino-acid biosynthesis; L-histidine biosynthesis; L-histidine from 5-phospho-alpha-D-ribose 1-diphosphate: step 5/9. Functionally, IGPS catalyzes the conversion of PRFAR and glutamine to IGP, AICAR and glutamate. The HisF subunit catalyzes the cyclization activity that produces IGP and AICAR from PRFAR using the ammonia provided by the HisH subunit. The chain is Imidazole glycerol phosphate synthase subunit HisF from Prochlorococcus marinus (strain MIT 9301).